Reading from the N-terminus, the 190-residue chain is Cypemycin cysteine dehydrogenase (decarboxylating) (190 aa).

Belongs to the HFCD (homooligomeric flavin containing Cys decarboxylase) superfamily.

It carries out the reaction [cypemycin](1-18)-L-Cys-L-Leu-L-Val-L-Cys + A = C(3,19),S(21)-[cypemycin](1-18)-L-Ala-L-Leu-N-thioethenyl-L-valinamide + hydrogen sulfide + AH2 + CO2. Its function is as follows. Involved in the biosynthesis of the lanaridin cypemycin. The polypeptide is Cypemycin cysteine dehydrogenase (decarboxylating) (Streptomyces sp).